A 119-amino-acid polypeptide reads, in one-letter code: Large ribosomal subunit protein uL24 (119 aa).

This sequence belongs to the universal ribosomal protein uL24 family. Part of the 50S ribosomal subunit.

One of two assembly initiator proteins, it binds directly to the 5'-end of the 23S rRNA, where it nucleates assembly of the 50S subunit. Its function is as follows. Located at the polypeptide exit tunnel on the outside of the subunit. This chain is Large ribosomal subunit protein uL24, found in Methanosarcina acetivorans (strain ATCC 35395 / DSM 2834 / JCM 12185 / C2A).